The primary structure comprises 212 residues: N-(5'-phosphoribosyl)anthranilate isomerase (212 aa).

The protein belongs to the TrpF family.

The catalysed reaction is N-(5-phospho-beta-D-ribosyl)anthranilate = 1-(2-carboxyphenylamino)-1-deoxy-D-ribulose 5-phosphate. Its pathway is amino-acid biosynthesis; L-tryptophan biosynthesis; L-tryptophan from chorismate: step 3/5. This chain is N-(5'-phosphoribosyl)anthranilate isomerase, found in Myxococcus xanthus (strain DK1622).